The sequence spans 93 residues: Auxin-induced protein 10A5 (93 aa).

Belongs to the ARG7 family.

This Glycine max (Soybean) protein is Auxin-induced protein 10A5.